A 711-amino-acid chain; its full sequence is Ribosomal RNA large subunit methyltransferase K/L (711 aa).

Residues 43-154 form the THUMP domain; it reads LAYRITLWSR…RGQITLGINF (112 aa).

This sequence belongs to the methyltransferase superfamily. RlmKL family.

The protein localises to the cytoplasm. The enzyme catalyses guanosine(2445) in 23S rRNA + S-adenosyl-L-methionine = N(2)-methylguanosine(2445) in 23S rRNA + S-adenosyl-L-homocysteine + H(+). It carries out the reaction guanosine(2069) in 23S rRNA + S-adenosyl-L-methionine = N(2)-methylguanosine(2069) in 23S rRNA + S-adenosyl-L-homocysteine + H(+). Its function is as follows. Specifically methylates the guanine in position 2445 (m2G2445) and the guanine in position 2069 (m7G2069) of 23S rRNA. The protein is Ribosomal RNA large subunit methyltransferase K/L of Shewanella loihica (strain ATCC BAA-1088 / PV-4).